Consider the following 223-residue polypeptide: Deoxyribose-phosphate aldolase (223 aa).

Residue aspartate 91 is the Proton donor/acceptor of the active site. The Schiff-base intermediate with acetaldehyde role is filled by lysine 153. The active-site Proton donor/acceptor is lysine 182.

It belongs to the DeoC/FbaB aldolase family. DeoC type 1 subfamily.

It is found in the cytoplasm. It catalyses the reaction 2-deoxy-D-ribose 5-phosphate = D-glyceraldehyde 3-phosphate + acetaldehyde. It participates in carbohydrate degradation; 2-deoxy-D-ribose 1-phosphate degradation; D-glyceraldehyde 3-phosphate and acetaldehyde from 2-deoxy-alpha-D-ribose 1-phosphate: step 2/2. Its function is as follows. Catalyzes a reversible aldol reaction between acetaldehyde and D-glyceraldehyde 3-phosphate to generate 2-deoxy-D-ribose 5-phosphate. The protein is Deoxyribose-phosphate aldolase of Yersinia pseudotuberculosis serotype O:1b (strain IP 31758).